The chain runs to 66 residues: Movement protein TGBp3 (66 aa).

Residues 1 to 2 (MD) lie on the Lumenal side of the membrane. The helical transmembrane segment at 3–23 (FTTLVIIGVYLLVFIVYFAKI) threads the bilayer. The Cytoplasmic portion of the chain corresponds to 24–66 (NTSMCTISISGASVEISGCDNPALFEILPNLKPFDHGLSVPSI).

This sequence belongs to the Tymovirales TGBp3 protein family.

It is found in the host endoplasmic reticulum membrane. Functionally, plays a role in viral cell-to-cell propagation, by facilitating genome transport to neighboring plant cells through plasmosdesmata. May induce the formation of granular vesicles derived from the Endoplasmic reticulum, which align on actin filaments. The chain is Movement protein TGBp3 from Trifolium (WCMV).